The primary structure comprises 283 residues: Elongation factor Ts (283 aa).

Positions 80 to 83 (TDFV) are involved in Mg(2+) ion dislocation from EF-Tu.

Belongs to the EF-Ts family.

Its subcellular location is the cytoplasm. Functionally, associates with the EF-Tu.GDP complex and induces the exchange of GDP to GTP. It remains bound to the aminoacyl-tRNA.EF-Tu.GTP complex up to the GTP hydrolysis stage on the ribosome. The chain is Elongation factor Ts from Klebsiella pneumoniae (strain 342).